The sequence spans 284 residues: HTH-type transcriptional activator RhaR (284 aa).

The 99-residue stretch at Asp-181–Arg-279 folds into the HTH araC/xylS-type domain. 2 consecutive DNA-binding regions (H-T-H motif) follow at residues Glu-198–Thr-219 and Ile-246–Phe-269.

As to quaternary structure, binds DNA as a dimer.

The protein resides in the cytoplasm. Its function is as follows. Activates expression of the rhaSR operon in response to L-rhamnose. The sequence is that of HTH-type transcriptional activator RhaR from Pectobacterium carotovorum subsp. carotovorum (strain PC1).